Here is a 205-residue protein sequence, read N- to C-terminus: Putative 3-methyladenine DNA glycosylase (205 aa).

The protein belongs to the DNA glycosylase MPG family.

The polypeptide is Putative 3-methyladenine DNA glycosylase (Bacillus cereus (strain ATCC 14579 / DSM 31 / CCUG 7414 / JCM 2152 / NBRC 15305 / NCIMB 9373 / NCTC 2599 / NRRL B-3711)).